A 722-amino-acid chain; its full sequence is Peroxisomal bifunctional enzyme (722 aa).

The interval 1-281 (MAEYLRLPHS…FAEKSANKWS (281 aa)) is enoyl-CoA hydratase / isomerase. A2 bears the Blocked amino end (Ala) mark. K38 bears the N6-succinyllysine mark. G100 provides a ligand contact to substrate. The residue at position 173 (K173) is an N6-acetyllysine; alternate. K173 bears the N6-succinyllysine; alternate mark. The residue at position 182 (K182) is an N6-succinyllysine. K190 and K218 each carry N6-acetyllysine; alternate. An N6-succinyllysine; alternate mark is found at K190 and K218. K241 carries the post-translational modification N6-succinyllysine. K249 is modified (N6-acetyllysine). K253 is subject to N6-succinyllysine. An N6-acetyllysine; alternate modification is found at K275. The residue at position 275 (K275) is an N6-succinyllysine; alternate. N6-succinyllysine occurs at positions 279, 289, and 330. A 3-hydroxyacyl-CoA dehydrogenase region spans residues 282–571 (TPSGASWKTA…DMLCEAGRFG (290 aa)). 3 positions are modified to N6-acetyllysine: K345, K359, and K463. An N6-succinyllysine modification is found at K531. T547 is modified (phosphothreonine). At K576 the chain carries N6-succinyllysine. N6-acetyllysine; alternate is present on residues K583, K590, and K709. 3 positions are modified to N6-succinyllysine; alternate: K583, K590, and K709. The short motif at 720-722 (SKL) is the Microbody targeting signal element. The residue at position 721 (K721) is an N6-succinyllysine.

In the N-terminal section; belongs to the enoyl-CoA hydratase/isomerase family. This sequence in the C-terminal section; belongs to the 3-hydroxyacyl-CoA dehydrogenase family. Monomer. In terms of processing, acetylated, leading to enhanced enzyme activity. Acetylation is enhanced by up to 80% after treatment either with trichostin A (TCA) or with nicotinamide (NAM) with highest increase on Lys-345. Acetylation and enzyme activity increased by about 1.5% on addition of fatty acids.

It is found in the peroxisome. It catalyses the reaction a (3S)-3-hydroxyacyl-CoA = a (2E)-enoyl-CoA + H2O. It carries out the reaction a 4-saturated-(3S)-3-hydroxyacyl-CoA = a (3E)-enoyl-CoA + H2O. The enzyme catalyses a (3Z)-enoyl-CoA = a 4-saturated (2E)-enoyl-CoA. The catalysed reaction is a (3E)-enoyl-CoA = a 4-saturated (2E)-enoyl-CoA. It catalyses the reaction a (3S)-3-hydroxyacyl-CoA + NAD(+) = a 3-oxoacyl-CoA + NADH + H(+). It carries out the reaction (2S,3S)-3-hydroxy-2-methylbutanoyl-CoA = (2E)-2-methylbut-2-enoyl-CoA + H2O. The enzyme catalyses (3E,5Z)-tetradecadienoyl-CoA = (2E,5Z)-tetradecadienoyl-CoA. The catalysed reaction is (3E,5Z)-octadienoyl-CoA = (2E,5Z)-octadienoyl-CoA. It catalyses the reaction (3S)-hydroxydecanoyl-CoA + NAD(+) = 3-oxodecanoyl-CoA + NADH + H(+). It carries out the reaction (3E)-decenoyl-CoA = (2E)-decenoyl-CoA. The enzyme catalyses (3Z)-hexenoyl-CoA = (2E)-hexenoyl-CoA. The catalysed reaction is (3E)-hexenoyl-CoA = (2E)-hexenoyl-CoA. It catalyses the reaction (3S)-hydroxydecanoyl-CoA = (2E)-decenoyl-CoA + H2O. It carries out the reaction (3S)-hydroxyhexanoyl-CoA = (2E)-hexenoyl-CoA + H2O. The enzyme catalyses (3S)-hydroxyhexadecanoyl-CoA + NAD(+) = 3-oxohexadecanoyl-CoA + NADH + H(+). The catalysed reaction is (3S)-hydroxyhexadecanoyl-CoA = (2E)-hexadecenoyl-CoA + H2O. It catalyses the reaction (2E)-hexadecenedioyl-CoA + H2O = (3S)-hydroxyhexadecanedioyl-CoA. It carries out the reaction (3S)-hydroxyhexadecanedioyl-CoA + NAD(+) = 3-oxohexadecanedioyl-CoA + NADH + H(+). It participates in lipid metabolism; fatty acid beta-oxidation. Enzyme activity enhanced by acetylation. Functionally, peroxisomal trifunctional enzyme possessing 2-enoyl-CoA hydratase, 3-hydroxyacyl-CoA dehydrogenase, and delta 3, delta 2-enoyl-CoA isomerase activities. Catalyzes two of the four reactions of the long chain fatty acids peroxisomal beta-oxidation pathway. Can also use branched-chain fatty acids such as 2-methyl-2E-butenoyl-CoA as a substrate, which is hydrated into (2S,3S)-3-hydroxy-2-methylbutanoyl-CoA. Optimal isomerase for 2,5 double bonds into 3,5 form isomerization in a range of enoyl-CoA species. Also able to isomerize both 3-cis and 3-trans double bonds into the 2-trans form in a range of enoyl-CoA species. Regulates the amount of medium-chain dicarboxylic fatty acids which are essential regulators of all fatty acid oxidation pathways. Also involved in the degradation of long-chain dicarboxylic acids through peroxisomal beta-oxidation. The polypeptide is Peroxisomal bifunctional enzyme (Rattus norvegicus (Rat)).